The sequence spans 1803 residues: Pyruvate dehydrogenase [NADP(+)], mitochondrial (1803 aa).

A mitochondrion-targeting transit peptide spans 1–37 (MKQSVRPIISNVLRKEVALYSTIIGQDKGKEPTGRTY). 4Fe-4S ferredoxin-type domains are found at residues 747-776 (FIPQ…PFVL) and 802-831 (FRIQ…MTDA). Positions 756, 759, 762, 766, 811, 814, 817, and 821 each coordinate [4Fe-4S] cluster. The Flavodoxin-like domain occupies 1248–1391 (VTILYGSETG…GFNNWIPSVW (144 aa)). Positions 1425-1650 (KSTPVLSITG…IHPTAMEFPD (226 aa)) constitute an FAD-binding FR-type domain. FAD contacts are provided by residues 1458-1469 (YQVGDSLGVFPE) and 1585-1595 (IKPRYYSISSA).

It in the N-terminal section; belongs to the pyruvate:ferredoxin/flavodoxin oxidoreductase family. Homodimer. Requires FAD as cofactor. FMN is required as a cofactor. Thiamine diphosphate serves as cofactor. It depends on iron-sulfur cluster as a cofactor.

It is found in the mitochondrion. The enzyme catalyses pyruvate + NADP(+) + CoA = acetyl-CoA + CO2 + NADPH. Its function is as follows. Pyruvate dehydrogenase [NADP(+)] is one of three enzymes participating in respiratory metabolism. The enzyme is also active with 2-oxobutyrate and oxaloacetate. The enzyme is oxygen sensitive. The chain is Pyruvate dehydrogenase [NADP(+)], mitochondrial (PNO) from Euglena gracilis.